A 216-amino-acid chain; its full sequence is Trimethylamine corrinoid protein 1 (216 aa).

Positions 1–92 (MASKEEIIAK…EMEKRKSETK (92 aa)) constitute a B12-binding N-terminal domain. Residues 94–216 (LGTVVIGTIE…VVSKVRAVLL (123 aa)) form the B12-binding domain. Histidine 107 contributes to the methylcob(III)alamin binding site.

Belongs to the methylamine corrinoid protein family. In terms of assembly, can form a complex with MttB.

It functions in the pathway one-carbon metabolism; methanogenesis from trimethylamine. Acts probably as a methyl group carrier between MttB and either MtbA or MtaA. The sequence is that of Trimethylamine corrinoid protein 1 (mttC1) from Methanosarcina acetivorans (strain ATCC 35395 / DSM 2834 / JCM 12185 / C2A).